We begin with the raw amino-acid sequence, 298 residues long: Cytosolic Fe-S cluster assembly factor CFD1 (298 aa).

25–32 (GKGGVGKS) contributes to the ATP binding site. Residues cysteine 215 and cysteine 218 each coordinate [4Fe-4S] cluster.

Belongs to the Mrp/NBP35 ATP-binding proteins family. NUBP2/CFD1 subfamily. Heterotetramer of 2 NBP35 and 2 CFD1 chains. It depends on [4Fe-4S] cluster as a cofactor.

The protein resides in the cytoplasm. In terms of biological role, component of the cytosolic iron-sulfur (Fe/S) protein assembly (CIA) machinery. Required for maturation of extramitochondrial Fe-S proteins. The NBP35-CFD1 heterotetramer forms a Fe-S scaffold complex, mediating the de novo assembly of an Fe-S cluster and its transfer to target apoproteins. Required for biogenesis and export of both ribosomal subunits, which may reflect a role in assembly of the Fe/S clusters in RLI1, a protein which performs rRNA processing and ribosome export. In Debaryomyces hansenii (strain ATCC 36239 / CBS 767 / BCRC 21394 / JCM 1990 / NBRC 0083 / IGC 2968) (Yeast), this protein is Cytosolic Fe-S cluster assembly factor CFD1.